A 437-amino-acid chain; its full sequence is Homogentisate 1,2-dioxygenase (437 aa).

Residues 15–34 (NEHATSDPRVPDALPVGQNS) form a disordered region. Positions 336, 342, and 372 each coordinate Fe cation.

This sequence belongs to the homogentisate dioxygenase family. It depends on Fe cation as a cofactor. Expressed in the hypodermis and intestine.

It carries out the reaction homogentisate + O2 = 4-maleylacetoacetate + H(+). Its pathway is amino-acid degradation; L-phenylalanine degradation; acetoacetate and fumarate from L-phenylalanine: step 4/6. Functionally, plays a role in the tyrosine degradation pathway. This chain is Homogentisate 1,2-dioxygenase, found in Caenorhabditis elegans.